The sequence spans 542 residues: Peptide chain release factor 3 (542 aa).

One can recognise a tr-type G domain in the interval 14–283 (DKRRNFAIIS…AFLEYALKPG (270 aa)). GTP contacts are provided by residues 23 to 30 (SHPDAGKT), 91 to 95 (DTPGH), and 145 to 148 (NKMD).

The protein belongs to the TRAFAC class translation factor GTPase superfamily. Classic translation factor GTPase family. PrfC subfamily.

It localises to the cytoplasm. In terms of biological role, increases the formation of ribosomal termination complexes and stimulates activities of RF-1 and RF-2. It binds guanine nucleotides and has strong preference for UGA stop codons. It may interact directly with the ribosome. The stimulation of RF-1 and RF-2 is significantly reduced by GTP and GDP, but not by GMP. This chain is Peptide chain release factor 3, found in Trichodesmium erythraeum (strain IMS101).